Here is a 191-residue protein sequence, read N- to C-terminus: GTP cyclohydrolase 1 (191 aa).

The Zn(2+) site is built by cysteine 80, histidine 83, and cysteine 151.

It belongs to the GTP cyclohydrolase I family. In terms of assembly, toroid-shaped homodecamer, composed of two pentamers of five dimers.

The enzyme catalyses GTP + H2O = 7,8-dihydroneopterin 3'-triphosphate + formate + H(+). It participates in cofactor biosynthesis; 7,8-dihydroneopterin triphosphate biosynthesis; 7,8-dihydroneopterin triphosphate from GTP: step 1/1. This chain is GTP cyclohydrolase 1, found in Leifsonia xyli subsp. xyli (strain CTCB07).